A 665-amino-acid chain; its full sequence is Cysteine-rich receptor-like protein kinase 26 (665 aa).

Residues 1–22 (MLSLLLPLISLLFQIQCFTVKS) form the signal peptide. Residues 23–283 (QPVPLNQICS…GDKNRGVPKA (261 aa)) lie on the Extracellular side of the membrane. 2 Gnk2-homologous domains span residues 26-129 (PLNQ…NRTI) and 135-244 (ISPH…PWRF). N-linked (GlcNAc...) asparagine glycosylation is found at N33, N37, N67, N126, N146, and N266. Residues 251 to 275 (DDPSSVPATPSRPPKNETRSVTQGD) are disordered. A helical transmembrane segment spans residues 284–304 (LIFASASVAIVVLFIVLLVVF). Residues 305–665 (LKLRRKENIR…YNSNTELYPR (361 aa)) lie on the Cytoplasmic side of the membrane. The 281-residue stretch at 344–624 (FSLENKLGEG…VLMLDGHTIA (281 aa)) folds into the Protein kinase domain. Residues 350–358 (LGEGGFGAV) and K372 each bind ATP. Y417 is modified (phosphotyrosine). D469 acts as the Proton acceptor in catalysis. S473 is subject to Phosphoserine. T510 is subject to Phosphothreonine. Y518 carries the phosphotyrosine modification. A disordered region spans residues 641–665 (SDSSSSLGHNAKTSNYNSNTELYPR). Residues 647–665 (LGHNAKTSNYNSNTELYPR) show a composition bias toward polar residues.

Belongs to the protein kinase superfamily. Ser/Thr protein kinase family. CRK subfamily.

The protein localises to the membrane. It catalyses the reaction L-seryl-[protein] + ATP = O-phospho-L-seryl-[protein] + ADP + H(+). The enzyme catalyses L-threonyl-[protein] + ATP = O-phospho-L-threonyl-[protein] + ADP + H(+). In Arabidopsis thaliana (Mouse-ear cress), this protein is Cysteine-rich receptor-like protein kinase 26 (CRK26).